We begin with the raw amino-acid sequence, 144 residues long: D-aminoacyl-tRNA deacylase (144 aa).

Residues 136–137 carry the Gly-cisPro motif, important for rejection of L-amino acids motif; it reads GP.

This sequence belongs to the DTD family. In terms of assembly, homodimer.

The protein localises to the cytoplasm. It catalyses the reaction glycyl-tRNA(Ala) + H2O = tRNA(Ala) + glycine + H(+). The enzyme catalyses a D-aminoacyl-tRNA + H2O = a tRNA + a D-alpha-amino acid + H(+). Functionally, an aminoacyl-tRNA editing enzyme that deacylates mischarged D-aminoacyl-tRNAs. Also deacylates mischarged glycyl-tRNA(Ala), protecting cells against glycine mischarging by AlaRS. Acts via tRNA-based rather than protein-based catalysis; rejects L-amino acids rather than detecting D-amino acids in the active site. By recycling D-aminoacyl-tRNA to D-amino acids and free tRNA molecules, this enzyme counteracts the toxicity associated with the formation of D-aminoacyl-tRNA entities in vivo and helps enforce protein L-homochirality. In Haemophilus influenzae (strain ATCC 51907 / DSM 11121 / KW20 / Rd), this protein is D-aminoacyl-tRNA deacylase.